A 358-amino-acid polypeptide reads, in one-letter code: Serine/threonine-protein phosphatase 2A activator (358 aa).

The tract at residues 1–20 (MAEGERQPPPDSSEEAPPAT) is disordered. Ala-2 bears the N-acetylalanine mark. Residues Arg-183, Thr-188, and Gly-189 each coordinate ATP. Mg(2+)-binding residues include Gly-243 and Asp-249. Residues Pro-339, Gln-342, and His-343 each coordinate ATP.

It belongs to the PTPA-type PPIase family. Associates with PP2A heterodimeric core enzyme PP2A(D), composed of a 36 kDa catalytic subunit (subunit C) and a 65 kDa constant regulatory subunit (PR65 or subunit A). Interacts with the catalytic subunit PPP2CA (via C-terminus). Interacts with PPP2CB. As to expression, widely expressed.

The protein resides in the cytoplasm. Its subcellular location is the nucleus. It carries out the reaction [protein]-peptidylproline (omega=180) = [protein]-peptidylproline (omega=0). Its function is as follows. PPIases accelerate the folding of proteins. It catalyzes the cis-trans isomerization of proline imidic peptide bonds in oligopeptides. Acts as a regulatory subunit for serine/threonine-protein phosphatase 2A (PP2A). Modulates PP2A activity or substrate specificity, probably by inducing a conformational change in the catalytic subunit, a proposed direct target of the PPIase. Can reactivate inactive phosphatase PP2A-phosphatase methylesterase complexes (PP2A(i)) in presence of ATP and Mg(2+). Reversibly stimulates the variable phosphotyrosyl phosphatase activity of PP2A core heterodimer PP2A(D) in presence of ATP and Mg(2+) (in vitro). The phosphotyrosyl phosphatase activity is dependent of an ATPase activity of the PP2A(D):PPP2R4 complex. Is involved in apoptosis; the function appears to be independent from PP2A. This Homo sapiens (Human) protein is Serine/threonine-protein phosphatase 2A activator.